The following is a 63-amino-acid chain: MHLQVYIVNGKRQYTLKKMDPEGKPTLSAHPARFSPDDKYSRHRITIKRRFKALKSEKRPKPL.

Residues 18–40 (KMDPEGKPTLSAHPARFSPDDKY) form a disordered region.

It belongs to the NOP10 family. In terms of assembly, component of the small nucleolar ribonucleoprotein particles containing H/ACA-type snoRNAs (H/ACA snoRNPs).

It is found in the nucleus. It localises to the nucleolus. Its function is as follows. Required for ribosome biogenesis. Part of a complex which catalyzes pseudouridylation of rRNA. This involves the isomerization of uridine such that the ribose is subsequently attached to C5, instead of the normal N1. Pseudouridine ('psi') residues may serve to stabilize the conformation of rRNAs. The protein is H/ACA ribonucleoprotein complex subunit 3-like protein of Trypanosoma cruzi.